The chain runs to 54 residues: Large ribosomal subunit protein bL32c (54 aa).

The protein belongs to the bacterial ribosomal protein bL32 family.

It localises to the plastid. The protein localises to the chloroplast. The polypeptide is Large ribosomal subunit protein bL32c (Panax ginseng (Korean ginseng)).